The following is a 210-amino-acid chain: Uracil phosphoribosyltransferase (210 aa).

Residues Arg-78, Arg-103, and 130 to 138 (DPMLATGGT) each bind 5-phospho-alpha-D-ribose 1-diphosphate. Uracil-binding positions include Ile-193 and 198–200 (GDA). Asp-199 serves as a coordination point for 5-phospho-alpha-D-ribose 1-diphosphate.

It belongs to the UPRTase family. Mg(2+) is required as a cofactor.

The enzyme catalyses UMP + diphosphate = 5-phospho-alpha-D-ribose 1-diphosphate + uracil. It functions in the pathway pyrimidine metabolism; UMP biosynthesis via salvage pathway; UMP from uracil: step 1/1. With respect to regulation, allosterically activated by GTP. Its function is as follows. Catalyzes the conversion of uracil and 5-phospho-alpha-D-ribose 1-diphosphate (PRPP) to UMP and diphosphate. This Stenotrophomonas maltophilia (strain K279a) protein is Uracil phosphoribosyltransferase.